The chain runs to 220 residues: UPF0319 protein YccT (220 aa).

The first 20 residues, 1 to 20, serve as a signal peptide directing secretion; it reads MKTGALATFLALCLPVTVFA.

Belongs to the UPF0319 family.

The chain is UPF0319 protein YccT from Salmonella enteritidis PT4 (strain P125109).